The chain runs to 123 residues: Small ribosomal subunit protein uS12cz/uS12cy (123 aa).

Belongs to the universal ribosomal protein uS12 family. Part of the 30S ribosomal subunit.

The protein resides in the plastid. The protein localises to the chloroplast. Its function is as follows. With S4 and S5 plays an important role in translational accuracy. Located at the interface of the 30S and 50S subunits. This chain is Small ribosomal subunit protein uS12cz/uS12cy (rps12-A), found in Nymphaea alba (White water-lily).